The chain runs to 489 residues: 2-(3-amino-3-carboxypropyl)histidine synthase subunit 2 (489 aa).

At M1 the chain carries N-acetylmethionine. S7 carries the phosphoserine modification. C89, C110, and C341 together coordinate [4Fe-4S] cluster. T435 is subject to Phosphothreonine. Residues S446 and S456 each carry the phosphoserine modification. Residue T467 is modified to Phosphothreonine. S488 is subject to Phosphoserine.

It belongs to the DPH1/DPH2 family. DPH2 subfamily. Component of the 2-(3-amino-3-carboxypropyl)histidine synthase complex composed of DPH1, DPH2, DPH3 and a NADH-dependent reductase. Interacts with DPH1. [4Fe-4S] cluster serves as cofactor. As to expression, strongly expressed in skeletal muscle. Moderately expressed in heart, small intestine, liver, pancreas, testis and colon. Weakly expressed in brain, placenta, kidney, spleen, thymus, prostate, ovary and lymphocytes.

It functions in the pathway protein modification; peptidyl-diphthamide biosynthesis. Its function is as follows. Required for the first step of diphthamide biosynthesis, a post-translational modification of histidine which occurs in elongation factor 2. DPH1 and DPH2 transfer a 3-amino-3-carboxypropyl (ACP) group from S-adenosyl-L-methionine (SAM) to a histidine residue, the reaction is assisted by a reduction system comprising DPH3 and a NADH-dependent reductase. Facilitates the reduction of the catalytic iron-sulfur cluster found in the DPH1 subunit. The sequence is that of 2-(3-amino-3-carboxypropyl)histidine synthase subunit 2 (DPH2) from Homo sapiens (Human).